We begin with the raw amino-acid sequence, 51 residues long: Small integral membrane protein 38 (51 aa).

Residues 13 to 33 traverse the membrane as a helical segment; it reads PLLALLVVILLARLILWSCLG.

Its subcellular location is the membrane. This Homo sapiens (Human) protein is Small integral membrane protein 38.